The following is a 952-amino-acid chain: MRVRHPPCSRRLLAICALVSLATAALLGHILLHDFLLVPRELSGSSPVLEETHPAHQQGASRPGPRDAQAHLGRPRAVPTQCDVPPNSRFDCAPDKAITREQCDARGCCYIPAKQGLRGAQMGQPWCFFPPSYPSYKLENLSSSEMGYTATLTRTTPTFFPKDILTLRLDVMMETENRLHFTIKDPANRRYEVPLETPRVHSRAPSPLYSVEFSEEPFGVIVRRQLDGRVLLNTTVAPLFFADQFLQLSTSLPSQYITGLAEHLSPLMLSTSWTRVTLWNRDLAPTPGANLYGSHPFYLALEDGGSAHGVFLLNSNAMDVVLQPSPALSWRSTGGILDVYIFLGPEPKSVVRQYLDVVGYPFMPPYWGLGFHLCRWGYSSTAITSQVVENMTRAHFPLDVQWNDLDYMDARRDFTFNKDGFRDFPAMVRELHQGGRRYMMIVDPAISSSGPAGSYRPYDEGLRRGVFITNETSQPLIGKVWPGSTAFPDFTNPAALAWWEDMVAEFHDQVPFDGMWIDMNEPSNFIRGSEDGCPDNELENPPYVPGVVGGTLQAATICASSHQFLSTHYNLHNLYGLTEAIASHRALVKARGTRPFVISRSTFAGHGRYAGHWTGDVWSSWEQLASSVPEILQFNLLGVPLVGADVCGFLGNTSEELCVRWTQLGAFYPFMRNHNGLLNLPQEPYSFSEPAQQAMRKALTLRYALLPHLYTLFHQAHVAGETVARPLFLEFPKDSSTWTVDHQLLWGEALLITPVLQAGKAEVTGYFPLGIWYDLQTVPIEALGSLPPPPAAPREPAIHSEGQWVTLPAPLDTINVHLRAGYIIPLQGPGLTTTESRQQPMALAVALTKGGEARGELFWDDGESLEVLERGAYTQVLFLARNNTIVNELVHVTSEGAGLQLQKVTVLGVATTPQQVLSNGVPVSNFTYSPDTKVLDIPVSLLMAEQFLISWS.

A signal peptide spans 1–27 (MRVRHPPCSRRLLAICALVSLATAALL). The propeptide occupies 28–69 (GHILLHDFLLVPRELSGSSPVLEETHPAHQQGASRPGPRDAQ). Positions 47 to 80 (PVLEETHPAHQQGASRPGPRDAQAHLGRPRAVPT) are disordered. One can recognise a P-type domain in the interval 80 to 131 (TQCDVPPNSRFDCAPDKAITREQCDARGCCYIPAKQGLRGAQMGQPWCFFPP). 3 disulfides stabilise this stretch: C82/C109, C92/C108, and C103/C127. 3 N-linked (GlcNAc...) asparagine glycosylation sites follow: N140, N233, and N390. D404 is a substrate binding site. N-linked (GlcNAc...) asparagine glycosylation is present at N470. D518 (nucleophile) is an active-site residue. The active site involves E521. C533 and C558 are oxidised to a cystine. R600 and D616 together coordinate substrate. C647 and C658 are joined by a disulfide. N-linked (GlcNAc...) asparagine glycosylation is present at N652. H674 is a substrate binding site. N882 and N925 each carry an N-linked (GlcNAc...) asparagine glycan.

The protein belongs to the glycosyl hydrolase 31 family.

It localises to the lysosome. It is found in the lysosome membrane. It carries out the reaction Hydrolysis of terminal, non-reducing (1-&gt;4)-linked alpha-D-glucose residues with release of alpha-D-glucose.. Essential for the degradation of glycogen in lysosomes. Has highest activity on alpha-1,4-linked glycosidic linkages, but can also hydrolyze alpha-1,6-linked glucans. The polypeptide is Lysosomal alpha-glucosidase (GAA) (Pongo abelii (Sumatran orangutan)).